We begin with the raw amino-acid sequence, 596 residues long: Zinc finger E-box-binding homeobox protein zag-1 (596 aa).

A C2H2-type 1 zinc finger spans residues 24-46 (FKCPECTKAFKFKHHLKEHIRIH). A C2H2-type 2; degenerate zinc finger spans residues 52–72 (FECQQCHKRFSHSGSYSSHMS). Residues 133–145 (LENGTSPTPTQEP) are compositionally biased toward polar residues. Disordered regions lie at residues 133–225 (LENG…RPLR), 324–369 (NNSL…EPEW), and 395–421 (GFVT…GSSS). The span at 165–179 (SEVKTEVKTEVKTED) shows a compositional bias: basic and acidic residues. Residues 188 to 200 (PAVSMSLSPAPEQ) are compositionally biased toward polar residues. Over residues 201-216 (NGNESMNNGGSGSDGK) the composition is skewed to low complexity. Residues 223–282 (PLRSRSFLNDSQVAVLQNHFKRNPFPSKYELSAVAEQIGVNKRVVQVWFQNTRAKERRSN) constitute a DNA-binding region (homeobox). Over residues 331–355 (QDERNNENTDEVMDHDGLKDGKETP) the composition is skewed to basic and acidic residues. C2H2-type zinc fingers lie at residues 481-503 (FSCD…KYEH) and 509-531 (YKCD…KRLH). The C2H2-type 5; degenerate zinc finger occupies 537–560 (FQCDKCLKRFSHSGSYSQHMNHRY). Residues 569–596 (QPASPSDVLNGGSVTVSPSSSNTPPPST) form a disordered region. The span at 578 to 590 (NGGSVTVSPSSSN) shows a compositional bias: low complexity.

In terms of tissue distribution, expressed in the six touch receptor neurons (TRNs) but not in the FLP and PVD neurons. Expressed in the M4 cholinergic motor neuron.

Its subcellular location is the nucleus. Its function is as follows. Transcription factor. Down-regulates expression of genes involved in either the synthesis or reuptake of serotonin, dopamine and GABA. Acts as a transcriptional repressor to regulate multiple, discrete, neuron-specific aspects of terminal differentiation, including cell migration, axonal development and gene expression. Promotes touch receptor neuron differentiation by repressing the expression of egl-44 and egl-46. As egl-44 and egl-46, probably acting as a heterodimer, repress expression of zag-1 in FLP neurons, together these proteins form a bistable, negative-feedback loop that regulates the choice between neuronal fates. Required for axon guidance. Involved in the proper development of the pharynx. Required for pharynx isthmus peristalsis, probably via a role in the differentiation of the M4 cholinergic motor neuron. Directly represses its own transcription by interacting with conserved E-box sequence motifs 5'-CACCTG-3' in its own promoter. May also act as a transcriptional activator of the homeodomain ceh-28. The chain is Zinc finger E-box-binding homeobox protein zag-1 from Caenorhabditis elegans.